We begin with the raw amino-acid sequence, 473 residues long: Glutamate--tRNA ligase (473 aa).

The 'HIGH' region signature appears at 11–21; that stretch reads PSPTGFLHIGG. The short motif at 240 to 244 is the 'KMSKS' region element; sequence KLSKR. Lys243 lines the ATP pocket.

The protein belongs to the class-I aminoacyl-tRNA synthetase family. Glutamate--tRNA ligase type 1 subfamily. In terms of assembly, monomer.

It is found in the cytoplasm. The enzyme catalyses tRNA(Glu) + L-glutamate + ATP = L-glutamyl-tRNA(Glu) + AMP + diphosphate. Its function is as follows. Catalyzes the attachment of glutamate to tRNA(Glu) in a two-step reaction: glutamate is first activated by ATP to form Glu-AMP and then transferred to the acceptor end of tRNA(Glu). This Rhodopseudomonas palustris (strain ATCC BAA-98 / CGA009) protein is Glutamate--tRNA ligase.